The sequence spans 283 residues: Acetylglutamate kinase (283 aa).

Substrate contacts are provided by residues 64-65 (GG), arginine 86, and asparagine 178.

The protein belongs to the acetylglutamate kinase family. ArgB subfamily.

It localises to the cytoplasm. It carries out the reaction N-acetyl-L-glutamate + ATP = N-acetyl-L-glutamyl 5-phosphate + ADP. It functions in the pathway amino-acid biosynthesis; L-arginine biosynthesis; N(2)-acetyl-L-ornithine from L-glutamate: step 2/4. Functionally, catalyzes the ATP-dependent phosphorylation of N-acetyl-L-glutamate. This is Acetylglutamate kinase from Lactococcus lactis subsp. cremoris (strain MG1363).